The following is a 341-amino-acid chain: Ribosomal RNA small subunit methyltransferase H (341 aa).

Residues G47–Y49, D64, F91, D109, and Q116 contribute to the S-adenosyl-L-methionine site.

It belongs to the methyltransferase superfamily. RsmH family.

The protein resides in the cytoplasm. The enzyme catalyses cytidine(1402) in 16S rRNA + S-adenosyl-L-methionine = N(4)-methylcytidine(1402) in 16S rRNA + S-adenosyl-L-homocysteine + H(+). In terms of biological role, specifically methylates the N4 position of cytidine in position 1402 (C1402) of 16S rRNA. The polypeptide is Ribosomal RNA small subunit methyltransferase H (Rhizobium rhizogenes (strain K84 / ATCC BAA-868) (Agrobacterium radiobacter)).